We begin with the raw amino-acid sequence, 163 residues long: Nucleotide-binding protein Clos_1967 (163 aa).

This sequence belongs to the YajQ family.

In terms of biological role, nucleotide-binding protein. The protein is Nucleotide-binding protein Clos_1967 of Alkaliphilus oremlandii (strain OhILAs) (Clostridium oremlandii (strain OhILAs)).